The following is a 344-amino-acid chain: Hypoxia-inducible factor 1-alpha inhibitor (344 aa).

Alanine 2 is subject to N-acetylalanine. In terms of domain architecture, JmjC spans 133 to 303 (GRVYLQQTLN…PKRIEYPLKA (171 aa)). Tyrosine 136 contacts 2-oxoglutarate. Residues aspartate 143 and 173-174 (LT) each bind substrate. Residue threonine 187 participates in 2-oxoglutarate binding. Residues histidine 190 and aspartate 192 each coordinate Fe cation. 192–194 (DEQ) is a substrate binding site. 2 residues coordinate 2-oxoglutarate: asparagine 196 and lysine 205. Substrate is bound at residue 229-230 (RQ). Fe cation is bound at residue histidine 270. Asparagine 285 lines the 2-oxoglutarate pocket. The substrate site is built by alanine 291 and asparagine 312.

Homodimer; homodimerization is essential for catalytic activity. It depends on Fe(2+) as a cofactor.

The protein localises to the nucleus. It is found in the cytoplasm. Its subcellular location is the perinuclear region. The enzyme catalyses L-asparaginyl-[hypoxia-inducible factor alpha subunit] + 2-oxoglutarate + O2 = (3S)-3-hydroxy-L-asparaginyl-[hypoxia-inducible factor alpha subunit] + succinate + CO2. The catalysed reaction is L-histidyl-[ankyrin-repeat domain protein] + 2-oxoglutarate + O2 = (3S)-3-hydroxy-L-histidyl-[ankyrin-repeat domain protein] + succinate + CO2. It catalyses the reaction L-asparaginyl-[ankyrin-repeat domain protein] + 2-oxoglutarate + O2 = (3S)-3-hydroxy-L-asparaginyl-[ankyrin-repeat domain protein] + succinate + CO2. It carries out the reaction L-aspartyl-[ankyrin-repeat domain protein] + 2-oxoglutarate + O2 = (3S)-3-hydroxy-L-aspartyl-[ankyrin-repeat domain protein] + succinate + CO2. Hydroxylates a specific Asn residue in the C-terminal transactivation domain (CAD) of HIF-1 alpha. The hydroxylation prevents interaction of HIF-1 with transcriptional coactivators. Also hydroxylates specific Asn, Asp and His residues within ankyrin repeat domain-containing proteins. The protein is Hypoxia-inducible factor 1-alpha inhibitor (hif1an) of Danio rerio (Zebrafish).